The chain runs to 101 residues: Small ribosomal subunit protein uS14A (101 aa).

Disordered regions lie at residues 1–20 (MAKKSKIAKNDRRQETVARY) and 28–72 (TEII…RPRG). Basic and acidic residues-rich tracts occupy residues 38–53 (EAERRAAQQELRRQPR) and 61–70 (RNRDSVDGRP).

It belongs to the universal ribosomal protein uS14 family. In terms of assembly, part of the 30S ribosomal subunit. Contacts proteins S3 and S10.

Binds 16S rRNA, required for the assembly of 30S particles and may also be responsible for determining the conformation of the 16S rRNA at the A site. The sequence is that of Small ribosomal subunit protein uS14A from Streptomyces avermitilis (strain ATCC 31267 / DSM 46492 / JCM 5070 / NBRC 14893 / NCIMB 12804 / NRRL 8165 / MA-4680).